Here is a 538-residue protein sequence, read N- to C-terminus: Chaperonin GroEL 2 (538 aa).

ATP-binding positions include 29–32, 86–90, G412, 479–481, and D495; these read TLGP, DGTTT, and NAA.

Belongs to the chaperonin (HSP60) family. As to quaternary structure, forms a cylinder of 14 subunits composed of two heptameric rings stacked back-to-back. Interacts with the co-chaperonin GroES.

The protein resides in the cytoplasm. The enzyme catalyses ATP + H2O + a folded polypeptide = ADP + phosphate + an unfolded polypeptide.. Its function is as follows. Together with its co-chaperonin GroES, plays an essential role in assisting protein folding. The GroEL-GroES system forms a nano-cage that allows encapsulation of the non-native substrate proteins and provides a physical environment optimized to promote and accelerate protein folding. The protein is Chaperonin GroEL 2 of Renibacterium salmoninarum (strain ATCC 33209 / DSM 20767 / JCM 11484 / NBRC 15589 / NCIMB 2235).